We begin with the raw amino-acid sequence, 59 residues long: UPF0434 protein Pnec_0311 (59 aa).

The protein belongs to the UPF0434 family.

This is UPF0434 protein Pnec_0311 from Polynucleobacter necessarius subsp. necessarius (strain STIR1).